The sequence spans 142 residues: Large ribosomal subunit protein uL13 (142 aa).

Belongs to the universal ribosomal protein uL13 family. As to quaternary structure, part of the 50S ribosomal subunit.

Functionally, this protein is one of the early assembly proteins of the 50S ribosomal subunit, although it is not seen to bind rRNA by itself. It is important during the early stages of 50S assembly. This chain is Large ribosomal subunit protein uL13, found in Actinobacillus pleuropneumoniae serotype 5b (strain L20).